The primary structure comprises 373 residues: Leucine aminopeptidase 1 (373 aa).

An N-terminal signal peptide occupies residues 1-18 (MKLLSVLALSATATSVLG). H176 and D195 together coordinate Zn(2+). The N-linked (GlcNAc...) asparagine glycan is linked to N196. Zn(2+) is bound by residues E234 and D261. N-linked (GlcNAc...) asparagine glycosylation is present at N288. An intrachain disulfide couples C310 to C314. H343 is a binding site for Zn(2+). N348 is a glycosylation site (N-linked (GlcNAc...) asparagine).

Belongs to the peptidase M28 family. M28E subfamily. As to quaternary structure, monomer. It depends on Zn(2+) as a cofactor.

The protein resides in the secreted. Its activity is regulated as follows. Activity is inhibited by EDTA, o-phenanthroline, bestatin and amastatin. Functionally, extracellular aminopeptidase which contributes to pathogenicity. The chain is Leucine aminopeptidase 1 (LAP1) from Trichophyton rubrum (Athlete's foot fungus).